A 363-amino-acid chain; its full sequence is Double-strand-specific pac1 ribonuclease (363 aa).

Disordered stretches follow at residues 1–35 and 92–138; these read MGRF…KRSS and SRHD…PPLR. The span at 13-22 shows a compositional bias: low complexity; sequence DSSSSASDSL. Positions 24-35 are enriched in basic residues; it reads RGRRSLGHKRSS. Position 122 is a phosphoserine (Ser-122). An RNase III domain is found at 139 to 262; it reads SEKLKEQVFM…YLGALILDGQ (124 aa). The region spanning 285-356 is the DRBM domain; it reads RPIDKLAKSK…AMQALEVLAK (72 aa).

The cofactor is Mg(2+).

The catalysed reaction is Endonucleolytic cleavage to 5'-phosphomonoester.. Digests double-stranded RNA. Converts long double-stranded RNAs into short oligonucleotides, leaving 5'-phosphates on their cleavage products. Probably inhibits mating and meiosis by degrading a specific mRNA required for sexual development. In Schizosaccharomyces pombe (strain 972 / ATCC 24843) (Fission yeast), this protein is Double-strand-specific pac1 ribonuclease (pac1).